The sequence spans 266 residues: Indole-3-glycerol phosphate synthase (266 aa).

Belongs to the TrpC family.

It carries out the reaction 1-(2-carboxyphenylamino)-1-deoxy-D-ribulose 5-phosphate + H(+) = (1S,2R)-1-C-(indol-3-yl)glycerol 3-phosphate + CO2 + H2O. It functions in the pathway amino-acid biosynthesis; L-tryptophan biosynthesis; L-tryptophan from chorismate: step 4/5. This Opitutus terrae (strain DSM 11246 / JCM 15787 / PB90-1) protein is Indole-3-glycerol phosphate synthase.